The following is a 415-amino-acid chain: Histidine--tRNA ligase (415 aa).

This sequence belongs to the class-II aminoacyl-tRNA synthetase family. Homodimer.

The protein resides in the cytoplasm. It carries out the reaction tRNA(His) + L-histidine + ATP = L-histidyl-tRNA(His) + AMP + diphosphate + H(+). The protein is Histidine--tRNA ligase of Clostridium botulinum (strain Loch Maree / Type A3).